We begin with the raw amino-acid sequence, 172 residues long: Adenine phosphoribosyltransferase (172 aa).

The protein belongs to the purine/pyrimidine phosphoribosyltransferase family. In terms of assembly, homodimer.

The protein localises to the cytoplasm. It catalyses the reaction AMP + diphosphate = 5-phospho-alpha-D-ribose 1-diphosphate + adenine. It functions in the pathway purine metabolism; AMP biosynthesis via salvage pathway; AMP from adenine: step 1/1. Catalyzes a salvage reaction resulting in the formation of AMP, that is energically less costly than de novo synthesis. This chain is Adenine phosphoribosyltransferase, found in Synechococcus sp. (strain CC9311).